We begin with the raw amino-acid sequence, 143 residues long: UPF0306 protein plu4501 (143 aa).

Belongs to the UPF0306 family.

The sequence is that of UPF0306 protein plu4501 from Photorhabdus laumondii subsp. laumondii (strain DSM 15139 / CIP 105565 / TT01) (Photorhabdus luminescens subsp. laumondii).